Here is a 484-residue protein sequence, read N- to C-terminus: ATP synthase subunit beta (484 aa).

An ATP-binding site is contributed by 152–159 (GGAGVGKT).

It belongs to the ATPase alpha/beta chains family. As to quaternary structure, F-type ATPases have 2 components, CF(1) - the catalytic core - and CF(0) - the membrane proton channel. CF(1) has five subunits: alpha(3), beta(3), gamma(1), delta(1), epsilon(1). CF(0) has three main subunits: a(1), b(2) and c(9-12). The alpha and beta chains form an alternating ring which encloses part of the gamma chain. CF(1) is attached to CF(0) by a central stalk formed by the gamma and epsilon chains, while a peripheral stalk is formed by the delta and b chains.

The protein localises to the cell inner membrane. It catalyses the reaction ATP + H2O + 4 H(+)(in) = ADP + phosphate + 5 H(+)(out). In terms of biological role, produces ATP from ADP in the presence of a proton gradient across the membrane. The catalytic sites are hosted primarily by the beta subunits. The sequence is that of ATP synthase subunit beta from Campylobacter lari (strain RM2100 / D67 / ATCC BAA-1060).